Here is a 240-residue protein sequence, read N- to C-terminus: Inhibitor of growth protein 5 (240 aa).

Position 114 is an N6-acetyllysine (Lys114). Positions 116 to 165 (EGSDFESSGGRGLKKGRGQKEKRGSRGRGRRTSEEDTPKKKKHKGGSEFT) are disordered. Ser118 is subject to Phosphoserine. Arg126 is modified (omega-N-methylarginine). A PHD-type zinc finger spans residues 186–235 (PTYCLCHQVSYGEMIGCDNPDCPIEWFHFACVDLTTKPKGKWFCPRCVQE). Zn(2+)-binding residues include Cys189, Cys191, Cys202, Cys207, His213, Cys216, Cys229, and Cys232.

The protein belongs to the ING family. As to quaternary structure, component of the HBO1 complex composed of KAT7/HBO1, MEAF6, ING5, and one scaffold subunit: complexes containing BRPF scaffold (BRPF1, BRD1/BRPF2 or BRPF3) direct KAT7/HBO1 specificity towards H3K14ac, while complexes containing JADE scaffold (JADE1, JADE2 and JADE3) mediate acetylation of histone H4. Component of the MOZ/MORF complex composed at least of ING5, KAT6A, KAT6B, MEAF6 and one of BRPF1, BRD1/BRPF2 and BRPF3. Interacts with H3K4me3 and to a lesser extent with H3K4me2. Interacts with EP300 and p53/TP53. Interacts with INCA1. As to expression, down-regulated in bone marrow cells in acute myeloid leukemia patients as compared with normal bone marrow cells.

Its subcellular location is the nucleus. It localises to the chromosome. In terms of biological role, component of the HBO1 complex, which specifically mediates acetylation of histone H3 at 'Lys-14' (H3K14ac) and, to a lower extent, acetylation of histone H4. Component of the MOZ/MORF complex which has a histone H3 acetyltransferase activity. Through chromatin acetylation it may regulate DNA replication and may function as a transcriptional coactivator. Inhibits cell growth, induces a delay in S-phase progression and enhances Fas-induced apoptosis in an INCA1-dependent manner. This is Inhibitor of growth protein 5 (ING5) from Homo sapiens (Human).